The sequence spans 391 residues: GTPase Obg (391 aa).

The 159-residue stretch at 1–159 folds into the Obg domain; sequence MKFIDEALIR…RDLQLELMLL (159 aa). The OBG-type G domain occupies 160-333; sequence ADVGMLGLPN…LTRDIMDFIE (174 aa). Residues 166 to 173, 191 to 195, 213 to 216, 283 to 286, and 314 to 316 contribute to the GTP site; these read GLPNAGKS, FTTLV, DIPG, NKID, and SAA. The Mg(2+) site is built by Ser-173 and Thr-193. The interval 361–391 is disordered; sequence QNPITEDDWDDLDDDGWTEEDDEGVEFIYKP. The segment covering 365–385 has biased composition (acidic residues); it reads TEDDWDDLDDDGWTEEDDEGV.

The protein belongs to the TRAFAC class OBG-HflX-like GTPase superfamily. OBG GTPase family. As to quaternary structure, monomer. Requires Mg(2+) as cofactor.

The protein resides in the cytoplasm. An essential GTPase which binds GTP, GDP and possibly (p)ppGpp with moderate affinity, with high nucleotide exchange rates and a fairly low GTP hydrolysis rate. Plays a role in control of the cell cycle, stress response, ribosome biogenesis and in those bacteria that undergo differentiation, in morphogenesis control. This Glaesserella parasuis serovar 5 (strain SH0165) (Haemophilus parasuis) protein is GTPase Obg.